The chain runs to 389 residues: Na(+)/H(+) antiporter NhaA 1 (389 aa).

Transmembrane regions (helical) follow at residues 12 to 32, 62 to 82, 97 to 117, 128 to 148, 157 to 177, 184 to 204, 220 to 240, 260 to 280, 282 to 302, 305 to 325, 331 to 351, and 365 to 385; these read VLNE…ALLV, FLLW…GLEL, IVLP…LFVL, GWAI…MMCG, IFLL…IAIF, IVAF…NILG, ISVL…AFFI, FWLA…VNLS, IDIG…LFVG, AGVF…LPQG, LYGV…IDGL, and LAIL…LKFF.

It belongs to the NhaA Na(+)/H(+) (TC 2.A.33) antiporter family.

The protein localises to the cell inner membrane. It catalyses the reaction Na(+)(in) + 2 H(+)(out) = Na(+)(out) + 2 H(+)(in). Na(+)/H(+) antiporter that extrudes sodium in exchange for external protons. The protein is Na(+)/H(+) antiporter NhaA 1 of Campylobacter jejuni subsp. jejuni serotype O:23/36 (strain 81-176).